Here is a 77-residue protein sequence, read N- to C-terminus: U10-lycotoxin-Ls1a (77 aa).

The N-terminal stretch at 1 to 20 is a signal peptide; sequence MKLIIFTGLVLFAIVSLIEA. Residues 21-26 constitute a propeptide that is removed on maturation; that stretch reads EEESGR.

This sequence belongs to the neurotoxin 19 (CSTX) family. 09 (U10-Lctx) subfamily. In terms of processing, contains 4 disulfide bonds. As to expression, expressed by the venom gland.

The protein localises to the secreted. This Lycosa singoriensis (Wolf spider) protein is U10-lycotoxin-Ls1a.